We begin with the raw amino-acid sequence, 580 residues long: Efflux pump dotC (580 aa).

Residues 1–34 are compositionally biased toward basic and acidic residues; the sequence is MSEDHTKADNLSEKDPHSPERSDSSSHEDAHARE. Residues 1-45 are disordered; it reads MSEDHTKADNLSEKDPHSPERSDSSSHEDAHAREEEESSDDDGAL. N-linked (GlcNAc...) asparagine glycosylation is present at N10. Positions 35-44 are enriched in acidic residues; it reads EEESSDDDGA. A helical membrane pass occupies residues 49–69; sequence PASLIAIVMIALSLAVFLSAL. N-linked (GlcNAc...) asparagine glycosylation is present at N86. Transmembrane regions (helical) follow at residues 89 to 109, 127 to 147, 153 to 173, 181 to 201, 209 to 229, 242 to 262, 275 to 295, 318 to 338, 348 to 368, 380 to 400, 409 to 429, 444 to 466, and 519 to 539; these read AAYT…TPIW, ALFM…MLIT, GAAG…LFSL, GMIG…GGAF, WCFY…FFFL, FAAI…MFLF, SATV…FGLV, ALLV…YLPL, PILA…SAAA, LIPM…LINF, LIIY…APLV, TATF…QVLY, and SPMW…ILLV. Positions 559–580 are disordered; it reads KKAEAERKAERQAKDLEKAQKS.

Belongs to the major facilitator superfamily. TCR/Tet family.

Its subcellular location is the cell membrane. It is found in the vacuole membrane. Efflux pump; part of the gene cluster that mediates the biosynthesis of dothistromin (DOTH), a polyketide toxin very similar in structure to the aflatoxin precursor, versicolorin B. One function of dotC may be to transport early-stage dothistromin biosynthetic intermediates from the cytoplasm into vacuoles, thereby affecting the rate of dothistromin production. The polypeptide is Efflux pump dotC (Dothistroma septosporum (strain NZE10 / CBS 128990) (Red band needle blight fungus)).